The chain runs to 435 residues: GTPase Der (435 aa).

EngA-type G domains are found at residues 4–167 (PTLA…PSED) and 175–350 (IKFS…ENQT). Residues 10–17 (GRPNVGKS), 57–61 (DTGGI), 119–122 (NKVD), 181–188 (GRPNVGKS), 228–232 (DTAGI), and 293–296 (NKWD) each bind GTP. Residues 351–435 (RRIQSSVLND…PIHIIARKRK (85 aa)) enclose the KH-like domain.

Belongs to the TRAFAC class TrmE-Era-EngA-EngB-Septin-like GTPase superfamily. EngA (Der) GTPase family. Associates with the 50S ribosomal subunit.

Functionally, GTPase that plays an essential role in the late steps of ribosome biogenesis. The sequence is that of GTPase Der from Lacticaseibacillus paracasei (strain ATCC 334 / BCRC 17002 / CCUG 31169 / CIP 107868 / KCTC 3260 / NRRL B-441) (Lactobacillus paracasei).